Reading from the N-terminus, the 266-residue chain is Putative zinc finger protein 034R (266 aa).

A disordered region spans residues 84–176 (SPTKSVDKAA…GPKRDSTQQP (93 aa)). A compositionally biased stretch (basic and acidic residues) spans 88-100 (SVDKAAQKEKKMP). 2 stretches are compositionally biased toward polar residues: residues 105 to 119 (KPTT…QGIL) and 160 to 176 (GVSQ…TQQP). The C3H1-type zinc finger occupies 180–192 (CKSVLKQAKCYFG).

This sequence belongs to the IIV-6 077L family.

This Aedes vexans (Inland floodwater mosquito) protein is Putative zinc finger protein 034R.